A 430-amino-acid chain; its full sequence is Serine--tRNA ligase (430 aa).

237 to 239 (TAE) lines the L-serine pocket. 268-270 (RSE) serves as a coordination point for ATP. Glu291 contacts L-serine. 355-358 (EISS) contacts ATP. Ser391 lines the L-serine pocket.

This sequence belongs to the class-II aminoacyl-tRNA synthetase family. Type-1 seryl-tRNA synthetase subfamily. Homodimer. The tRNA molecule binds across the dimer.

It is found in the cytoplasm. The enzyme catalyses tRNA(Ser) + L-serine + ATP = L-seryl-tRNA(Ser) + AMP + diphosphate + H(+). The catalysed reaction is tRNA(Sec) + L-serine + ATP = L-seryl-tRNA(Sec) + AMP + diphosphate + H(+). The protein operates within aminoacyl-tRNA biosynthesis; selenocysteinyl-tRNA(Sec) biosynthesis; L-seryl-tRNA(Sec) from L-serine and tRNA(Sec): step 1/1. Catalyzes the attachment of serine to tRNA(Ser). Is also able to aminoacylate tRNA(Sec) with serine, to form the misacylated tRNA L-seryl-tRNA(Sec), which will be further converted into selenocysteinyl-tRNA(Sec). This Escherichia fergusonii (strain ATCC 35469 / DSM 13698 / CCUG 18766 / IAM 14443 / JCM 21226 / LMG 7866 / NBRC 102419 / NCTC 12128 / CDC 0568-73) protein is Serine--tRNA ligase.